The sequence spans 107 residues: Small ribosomal subunit protein uS10m (107 aa).

The protein belongs to the universal ribosomal protein uS10 family.

It is found in the mitochondrion. This chain is Small ribosomal subunit protein uS10m (RPS10), found in Prototheca wickerhamii.